The sequence spans 335 residues: 3-hydroxyisobutyrate dehydrogenase, mitochondrial (335 aa).

The N-terminal 35 residues, 1–35, are a transit peptide targeting the mitochondrion; that stretch reads MAASLGFRGAASGLWYWSGRRRPVGSLAAVCSRSM. 39-68 provides a ligand contact to NAD(+); that stretch reads TPVGFIGLGNMGNPMAKNLMKHGYPLILYD. Lys59, Lys75, and Lys78 each carry N6-acetyllysine; alternate. 3 positions are modified to N6-succinyllysine; alternate: Lys59, Lys75, and Lys78. Lys94 carries the N6-succinyllysine modification. NAD(+) contacts are provided by residues 102-103 and Asn107; that span reads LP. Lys120 is subject to N6-acetyllysine. Position 133 (Thr133) interacts with NAD(+). The residue at position 140 (Lys140) is an N6-succinyllysine. At Lys144 the chain carries N6-acetyllysine. Lys148 carries the post-translational modification N6-acetyllysine; alternate. Lys148 is subject to N6-succinyllysine; alternate. Lys208 is a catalytic residue. N6-acetyllysine; alternate is present on residues Lys237 and Lys241. Lys237 and Lys241 each carry N6-succinyllysine; alternate. Lys283 contributes to the NAD(+) binding site. Lys296 carries the post-translational modification N6-succinyllysine. Position 320 is an N6-acetyllysine; alternate (Lys320). Lys320 is modified (N6-succinyllysine; alternate).

Belongs to the HIBADH-related family. 3-hydroxyisobutyrate dehydrogenase subfamily. As to quaternary structure, homodimer.

It localises to the mitochondrion. The enzyme catalyses 3-hydroxy-2-methylpropanoate + NAD(+) = 2-methyl-3-oxopropanoate + NADH + H(+). The protein operates within amino-acid degradation; L-valine degradation. This is 3-hydroxyisobutyrate dehydrogenase, mitochondrial (Hibadh) from Mus musculus (Mouse).